A 95-amino-acid polypeptide reads, in one-letter code: ESAT-6-like protein EsxH (95 aa).

It belongs to the WXG100 family. ESAT-6 subfamily. Forms a tight 1:1 complex with EsxG.

The protein resides in the secreted. The sequence is that of ESAT-6-like protein EsxH from Mycolicibacterium smegmatis (strain ATCC 700084 / mc(2)155) (Mycobacterium smegmatis).